The primary structure comprises 311 residues: tRNA dimethylallyltransferase (311 aa).

Residue 12-19 coordinates ATP; the sequence is GPTASGKT. Substrate is bound at residue 14–19; sequence TASGKT. Interaction with substrate tRNA regions lie at residues 37 to 40 and 161 to 165; these read DSAM and QRIQR.

It belongs to the IPP transferase family. Monomer. The cofactor is Mg(2+).

The catalysed reaction is adenosine(37) in tRNA + dimethylallyl diphosphate = N(6)-dimethylallyladenosine(37) in tRNA + diphosphate. Its function is as follows. Catalyzes the transfer of a dimethylallyl group onto the adenine at position 37 in tRNAs that read codons beginning with uridine, leading to the formation of N6-(dimethylallyl)adenosine (i(6)A). The polypeptide is tRNA dimethylallyltransferase (Coxiella burnetii (strain RSA 331 / Henzerling II)).